The primary structure comprises 313 residues: tRNA dimethylallyltransferase (313 aa).

Residue 17 to 24 participates in ATP binding; that stretch reads GPTASGKT. 19–24 contacts substrate; it reads TASGKT. Interaction with substrate tRNA regions lie at residues 42–45, 166–170, 247–252, and 280–287; these read DSAL, QRLSR, RCVGYR, and KRQITWLR.

Belongs to the IPP transferase family. As to quaternary structure, monomer. Mg(2+) serves as cofactor.

The enzyme catalyses adenosine(37) in tRNA + dimethylallyl diphosphate = N(6)-dimethylallyladenosine(37) in tRNA + diphosphate. Functionally, catalyzes the transfer of a dimethylallyl group onto the adenine at position 37 in tRNAs that read codons beginning with uridine, leading to the formation of N6-(dimethylallyl)adenosine (i(6)A). This Photorhabdus laumondii subsp. laumondii (strain DSM 15139 / CIP 105565 / TT01) (Photorhabdus luminescens subsp. laumondii) protein is tRNA dimethylallyltransferase.